A 509-amino-acid chain; its full sequence is ATP synthase subunit alpha 1 (509 aa).

172 to 179 (GDRQTGKT) contributes to the ATP binding site.

This sequence belongs to the ATPase alpha/beta chains family. In terms of assembly, F-type ATPases have 2 components, CF(1) - the catalytic core - and CF(0) - the membrane proton channel. CF(1) has five subunits: alpha(3), beta(3), gamma(1), delta(1), epsilon(1). CF(0) has four main subunits: a(1), b(1), b'(1) and c(9-12).

The protein localises to the cell inner membrane. It carries out the reaction ATP + H2O + 4 H(+)(in) = ADP + phosphate + 5 H(+)(out). Its function is as follows. Produces ATP from ADP in the presence of a proton gradient across the membrane. The alpha chain is a regulatory subunit. The protein is ATP synthase subunit alpha 1 of Dinoroseobacter shibae (strain DSM 16493 / NCIMB 14021 / DFL 12).